We begin with the raw amino-acid sequence, 119 residues long: Beta-2-microglobulin (119 aa).

The N-terminal stretch at 1-20 (MARFVVVALLVLLSLSGLEA) is a signal peptide. An Ig-like C1-type domain is found at 25-114 (PKIQVYSRHP…VTLSTPKTVK (90 aa)). A disulfide bridge links cysteine 45 with cysteine 100.

It belongs to the beta-2-microglobulin family. In terms of assembly, heterodimer of an alpha chain and a beta chain. Beta-2-microglobulin is the beta-chain of major histocompatibility complex class I molecules.

It localises to the secreted. Functionally, component of the class I major histocompatibility complex (MHC). Involved in the presentation of peptide antigens to the immune system. This chain is Beta-2-microglobulin (B2M), found in Aotus azarae (Azara's night monkey).